Consider the following 291-residue polypeptide: tRNA U34 carboxymethyltransferase (291 aa).

Residues K61, W75, K80, G100, 122-124 (DPS), 149-150 (VE), Y169, and R284 each bind carboxy-S-adenosyl-L-methionine.

Belongs to the class I-like SAM-binding methyltransferase superfamily. CmoB family. Homotetramer.

The catalysed reaction is carboxy-S-adenosyl-L-methionine + 5-hydroxyuridine(34) in tRNA = 5-carboxymethoxyuridine(34) in tRNA + S-adenosyl-L-homocysteine + H(+). In terms of biological role, catalyzes carboxymethyl transfer from carboxy-S-adenosyl-L-methionine (Cx-SAM) to 5-hydroxyuridine (ho5U) to form 5-carboxymethoxyuridine (cmo5U) at position 34 in tRNAs. The sequence is that of tRNA U34 carboxymethyltransferase from Campylobacter jejuni subsp. jejuni serotype O:6 (strain 81116 / NCTC 11828).